The primary structure comprises 803 residues: Leucine--tRNA ligase (803 aa).

The short motif at 40–51 (PYPSGAGLHVGH) is the 'HIGH' region element. The short motif at 575–579 (KMSKS) is the 'KMSKS' region element. Residue lysine 578 coordinates ATP.

It belongs to the class-I aminoacyl-tRNA synthetase family.

The protein localises to the cytoplasm. It carries out the reaction tRNA(Leu) + L-leucine + ATP = L-leucyl-tRNA(Leu) + AMP + diphosphate. The protein is Leucine--tRNA ligase of Listeria monocytogenes serotype 4a (strain HCC23).